The sequence spans 324 residues: Lactonase drp35 (324 aa).

10 residues coordinate Ca(2+): Glu-47, Ser-109, Gly-111, Asp-129, Thr-132, Tyr-134, Asp-137, Asn-184, Asp-235, and Ser-236. Asp-235 serves as the catalytic Proton donor.

Belongs to the SMP-30/CGR1 family. It depends on Ca(2+) as a cofactor.

It is found in the cytoplasm. Functionally, exhibits lactonase activity. Acts in cells with perturbed membrane integrity and is possibly related to the membrane homeostasis. In Staphylococcus aureus (strain USA300), this protein is Lactonase drp35 (drp35).